Consider the following 236-residue polypeptide: Eukaryotic translation initiation factor 3 subunit J (236 aa).

The segment at 1–84 (MADDWESAAD…LREEEAEAER (84 aa)) is disordered. Positions 28–46 (GEDEDEDIKDSWEDEEEKK) are enriched in acidic residues. Basic and acidic residues-rich tracts occupy residues 47–58 (DEEKPTKTEAPA) and 68–77 (AKLEQQALRE).

The protein belongs to the eIF-3 subunit J family. As to quaternary structure, component of the eukaryotic translation initiation factor 3 (eIF-3) complex. The eIF-3 complex interacts with pix.

It is found in the cytoplasm. Component of the eukaryotic translation initiation factor 3 (eIF-3) complex, which is involved in protein synthesis of a specialized repertoire of mRNAs and, together with other initiation factors, stimulates binding of mRNA and methionyl-tRNAi to the 40S ribosome. The eIF-3 complex specifically targets and initiates translation of a subset of mRNAs involved in cell proliferation. This Drosophila sechellia (Fruit fly) protein is Eukaryotic translation initiation factor 3 subunit J.